We begin with the raw amino-acid sequence, 215 residues long: HTH-type transcriptional regulator AcrR (215 aa).

The region spanning 10-70 (QETRQHILDV…EIWELSESNI (61 aa)) is the HTH tetR-type domain. The segment at residues 33–52 (SLGEIAKAAGVTRGAIYWHF) is a DNA-binding region (H-T-H motif).

In terms of biological role, potential regulator protein for the acrAB genes. This Shigella flexneri protein is HTH-type transcriptional regulator AcrR (acrR).